Here is a 265-residue protein sequence, read N- to C-terminus: Hydroxyethylthiazole kinase (265 aa).

A substrate-binding site is contributed by Met-50. Positions 125 and 171 each coordinate ATP. Residue Gly-198 participates in substrate binding.

It belongs to the Thz kinase family. It depends on Mg(2+) as a cofactor.

It carries out the reaction 5-(2-hydroxyethyl)-4-methylthiazole + ATP = 4-methyl-5-(2-phosphooxyethyl)-thiazole + ADP + H(+). The protein operates within cofactor biosynthesis; thiamine diphosphate biosynthesis; 4-methyl-5-(2-phosphoethyl)-thiazole from 5-(2-hydroxyethyl)-4-methylthiazole: step 1/1. Catalyzes the phosphorylation of the hydroxyl group of 4-methyl-5-beta-hydroxyethylthiazole (THZ). This chain is Hydroxyethylthiazole kinase, found in Cronobacter sakazakii (strain ATCC BAA-894) (Enterobacter sakazakii).